The following is an 860-amino-acid chain: Leucine--tRNA ligase (860 aa).

Residues 42–52 carry the 'HIGH' region motif; that stretch reads PYPSGRLHMGH. The short motif at 619–623 is the 'KMSKS' region element; that stretch reads KMSKS. ATP is bound at residue lysine 622.

This sequence belongs to the class-I aminoacyl-tRNA synthetase family.

It localises to the cytoplasm. The catalysed reaction is tRNA(Leu) + L-leucine + ATP = L-leucyl-tRNA(Leu) + AMP + diphosphate. The chain is Leucine--tRNA ligase from Escherichia coli O17:K52:H18 (strain UMN026 / ExPEC).